The following is an 884-amino-acid chain: MAVRSRRPWVSVALGLVLGFTAASWLIAPRVAELSEKRRRGSSLCSYYGRSATGPRADAQQLLPQPQSRPRLEQSPPPASHELPGPQQPEAAPGGPSFRSSPWQQPALLPQRRRGHTPEGATALPGAPAAKGEPEEEDGGAADPRKGGRPGSSHNGSGDGGAAVPTSGPGDFLYVGVMTAQKYLGSRALAAQRTWARFIPGRVEFFSSQQSPSAALGQPPPPLPVIALPGVDDSYPPQKKSFMMIKYMHDHYLDKYEWFMRADDDVYIKGDKLEEFLRSLNSSKPLYLGQTGLGNTEELGKLGLEPGENFCMGGPGMIFSREVLRRMVPHIGECLREMYTTHEDVEVGRCVRRFGGTQCVWSYEMQQLFHENYEHNRKGYIQDLHNSKIHAAITLHPNKRPAYQYRLHNYMLSRKISELRYRTIQLHRESALMSKLSNSEVSKEDQQLGRTPSFNHFQPRERNEVMEWEFLTGKLLYSAAENQPPRQSINSILRSALDDTVLQVMEMINENAKSRGRLIDFKEIQYGYRRVDPMHGVEYILDLLLLYKRHKGRKLTVPVRRHAYLQQPFSKPFFREVEELDVNRLVESINSGTQSFSVISNSLKILSSLQEAKDIGGHNEKKVHILVPLVGRYDIFLRFMENFESTCLIPKQNVKLVIILFSRDAGQESIKHIELIQEYQSRYPSAEMMLIPMKGEFSRGLGLEMASSQFDNDTLLLFCDVDLIFRGDFLQRCRDNTVQGQQVYYPIIFSQYDPKVTHMRNPPTEGDFVFSKETGFWRDYGYGITCIYKSDLLGAGGFDTSIQGWGLEDVDLYNKVILSGLRPFRSQEVGVVHIFHPVHCDPNLDPKQYKMCLGSKASTFASTMQLAELWLEKHLGVRDNRTLS.

The Cytoplasmic segment spans residues Met-1–Arg-7. A helical; Signal-anchor for type II membrane protein membrane pass occupies residues Pro-8–Ala-28. Residues Pro-29–Ser-884 are Lumenal-facing. Residues Tyr-47 to Val-164 are disordered. 2 stretches are compositionally biased toward low complexity: residues Gln-60–Arg-69 and Pro-84–Pro-96. Residues Asn-155 and Asn-281 are each glycosylated (N-linked (GlcNAc...) asparagine). Residues Ser-437–His-456 are disordered. N-linked (GlcNAc...) asparagine glycosylation occurs at Asn-712. A divalent metal cation-binding residues include Asp-722 and His-836. Residue Asn-880 is glycosylated (N-linked (GlcNAc...) asparagine).

Belongs to the chondroitin N-acetylgalactosaminyltransferase family. Requires Co(2+) as cofactor. Mn(2+) serves as cofactor. It depends on Cd(2+) as a cofactor.

The protein localises to the golgi apparatus. Its subcellular location is the golgi stack membrane. It carries out the reaction 3-O-(beta-D-GlcA-(1-&gt;3)-beta-D-GalNAc-(1-&gt;4)-beta-D-GlcA-(1-&gt;3)-beta-D-Gal-(1-&gt;3)-beta-D-Gal-(1-&gt;4)-beta-D-Xyl)-L-seryl-[protein] + UDP-N-acetyl-alpha-D-galactosamine = 3-O-(beta-D-GalNAc-(1-&gt;4)-beta-D-GlcA-(1-&gt;3)-beta-D-GalNAc-(1-&gt;4)-beta-D-GlcA-(1-&gt;3)-beta-D-Gal-(1-&gt;3)-beta-D-Gal-(1-&gt;4)-beta-D-Xyl)-L-seryl-[protein] + UDP + H(+). It catalyses the reaction 3-O-{beta-D-GlcA-(1-&gt;3)-[beta-D-GalNAc-(1-&gt;4)-beta-D-GlcA-(1-&gt;3)](n)-beta-D-GalNAc-(1-&gt;4)-beta-D-GlcA-(1-&gt;3)-beta-D-Gal-(1-&gt;3)-beta-D-Gal-(1-&gt;4)-beta-D-Xyl}-L-seryl-[protein] + UDP-N-acetyl-alpha-D-galactosamine = 3-O-{[beta-D-GalNAc-(1-&gt;4)-beta-D-GlcA-(1-&gt;3)](n+1)-beta-D-GalNAc-(1-&gt;4)-beta-D-GlcA-(1-&gt;3)-beta-D-Gal-(1-&gt;3)-beta-D-Gal-(1-&gt;4)-beta-D-Xyl}-L-seryl-[protein] + UDP + H(+). The catalysed reaction is 3-O-(beta-D-GalNAc-(1-&gt;4)-beta-D-GlcA-(1-&gt;3)-beta-D-Gal-(1-&gt;3)-beta-D-Gal-(1-&gt;4)-beta-D-Xyl)-L-seryl-[protein] + UDP-alpha-D-glucuronate = 3-O-(beta-D-GlcA-(1-&gt;3)-beta-D-GalNAc-(1-&gt;4)-beta-D-GlcA-(1-&gt;3)-beta-D-Gal-(1-&gt;3)-beta-D-Gal-(1-&gt;4)-beta-D-Xyl)-L-seryl-[protein] + UDP + H(+). The enzyme catalyses 3-O-{[beta-D-GalNAc-(1-&gt;4)-beta-D-GlcA-(1-&gt;3)](n)-beta-D-GalNAc-(1-&gt;4)-beta-D-GlcA-(1-&gt;3)-beta-D-Gal-(1-&gt;3)-beta-D-Gal-(1-&gt;4)-beta-D-Xyl}-L-seryl-[protein] + UDP-alpha-D-glucuronate = 3-O-{beta-D-GlcA-(1-&gt;3)-[beta-D-GalNAc-(1-&gt;4)-beta-D-GlcA-(1-&gt;3)](n)-beta-D-GalNAc-(1-&gt;4)-beta-D-GlcA-(1-&gt;3)-beta-D-Gal-(1-&gt;3)-beta-D-Gal-(1-&gt;4)-beta-D-Xyl}-L-seryl-[protein] + UDP + H(+). Has both beta-1,3-glucuronic acid and beta-1,4-N-acetylgalactosamine transferase activity. Transfers glucuronic acid (GlcUA) from UDP-GlcUA and N-acetylgalactosamine (GalNAc) from UDP-GalNAc to the non-reducing end of the elongating chondroitin polymer. Specific activity is much reduced compared to CHSY1. The protein is Chondroitin sulfate synthase 3 (Chsy3) of Mus musculus (Mouse).